A 274-amino-acid chain; its full sequence is Subtilisin DY (274 aa).

Residue Gln-2 coordinates Ca(2+). A Peptidase S8 domain is found at 5–273 (PYGIPLIKAD…KGLINVEAAA (269 aa)). The Charge relay system role is filled by Asp-32. Asp-41 provides a ligand contact to Ca(2+). The Charge relay system role is filled by His-63. Residues Leu-74, Asn-76, Val-80, Ala-168, Tyr-170, and Val-173 each contribute to the Ca(2+) site. The active-site Charge relay system is the Ser-220.

This sequence belongs to the peptidase S8 family. Ca(2+) serves as cofactor.

It localises to the secreted. It catalyses the reaction Hydrolysis of proteins with broad specificity for peptide bonds, and a preference for a large uncharged residue in P1. Hydrolyzes peptide amides.. In terms of biological role, subtilisin is an extracellular alkaline serine protease, it catalyzes the hydrolysis of proteins and peptide amides. This is Subtilisin DY (apr) from Bacillus licheniformis.